The sequence spans 67 residues: UPF0253 protein VS_2370 (67 aa).

It belongs to the UPF0253 family.

The protein is UPF0253 protein VS_2370 of Vibrio atlanticus (strain LGP32) (Vibrio splendidus (strain Mel32)).